We begin with the raw amino-acid sequence, 308 residues long: Methionyl-tRNA formyltransferase (308 aa).

109 to 112 lines the (6S)-5,6,7,8-tetrahydrofolate pocket; sequence SLLP.

It belongs to the Fmt family.

It carries out the reaction L-methionyl-tRNA(fMet) + (6R)-10-formyltetrahydrofolate = N-formyl-L-methionyl-tRNA(fMet) + (6S)-5,6,7,8-tetrahydrofolate + H(+). Its function is as follows. Attaches a formyl group to the free amino group of methionyl-tRNA(fMet). The formyl group appears to play a dual role in the initiator identity of N-formylmethionyl-tRNA by promoting its recognition by IF2 and preventing the misappropriation of this tRNA by the elongation apparatus. The polypeptide is Methionyl-tRNA formyltransferase (Methylococcus capsulatus (strain ATCC 33009 / NCIMB 11132 / Bath)).